The primary structure comprises 340 residues: Protein HP_1247 (340 aa).

Seems to interact with H.pylori HolB.

Could be the functional equivalent of DNA polymerase III delta subunit (HolA). In Helicobacter pylori (strain ATCC 700392 / 26695) (Campylobacter pylori), this protein is Protein HP_1247.